Here is a 282-residue protein sequence, read N- to C-terminus: PILR alpha-associated neural protein (282 aa).

The N-terminal stretch at 1–31 (MESRMWPALLLSHLLPLWPLLLLPLPPPAQG) is a signal peptide. The interval 28–99 (PAQGSSSSPR…PSGFEEGPPS (72 aa)) is disordered. Topologically, residues 32–178 (SSSSPRTPPA…FGGRGEGVDP (147 aa)) are extracellular. The segment covering 46-56 (PCARGGPSAPR) has biased composition (low complexity). Residue Thr140 is glycosylated (O-linked (GalNAc...) threonine). The chain crosses the membrane as a helical span at residues 179–199 (QLYVTITISIIIVLVATGIIF). The Cytoplasmic segment spans residues 200–282 (KFCWDRSQKR…QLNRIPLVNL (83 aa)). The disordered stretch occupies residues 209–282 (RRRPSGQQGA…QLNRIPLVNL (74 aa)). Residues 213-229 (SGQQGALRQEESQQPLT) are compositionally biased toward polar residues.

In terms of processing, O-glycosylation at Thr-140 is essential for recognition by PILRA. In terms of tissue distribution, mainly expressed in adult brain and cerebellum. Weaker expression in fetal brain and virtually no expression in spleen, heart, kidney, liver and dorsal ganglion relative to brain.

The protein resides in the membrane. In terms of biological role, acts as a ligand for PILRA in neural tissues, where it may be involved in immune regulation. The polypeptide is PILR alpha-associated neural protein (PIANP) (Homo sapiens (Human)).